The sequence spans 565 residues: CTP synthase (565 aa).

Residues 1-268 form an amidoligase domain region; it reads MQTKYIFVTG…GELVVDRFYP (268 aa). Ser14 provides a ligand contact to CTP. Residue Ser14 participates in UTP binding. 15-20 contributes to the ATP binding site; that stretch reads SLGKGI. Tyr55 provides a ligand contact to L-glutamine. Residue Asp72 coordinates ATP. The Mg(2+) site is built by Asp72 and Glu142. CTP contacts are provided by residues 149–151, 189–194, and Lys225; these read DIE and KTKPTQ. Residues 189-194 and Lys225 contribute to the UTP site; that span reads KTKPTQ. Residues 301–543 form the Glutamine amidotransferase type-1 domain; sequence PIALVGKYVE…VRACTAYAHE (243 aa). Gly363 is an L-glutamine binding site. Cys390 acts as the Nucleophile; for glutamine hydrolysis in catalysis. Residues 391–394, Glu414, and Arg471 each bind L-glutamine; that span reads LGLQ. Residues His516 and Glu518 contribute to the active site. Residues 545–565 form a disordered region; it reads DLVTSPQPPERKAVPLASVDM.

Belongs to the CTP synthase family. In terms of assembly, homotetramer.

The enzyme catalyses UTP + L-glutamine + ATP + H2O = CTP + L-glutamate + ADP + phosphate + 2 H(+). It carries out the reaction L-glutamine + H2O = L-glutamate + NH4(+). The catalysed reaction is UTP + NH4(+) + ATP = CTP + ADP + phosphate + 2 H(+). Its pathway is pyrimidine metabolism; CTP biosynthesis via de novo pathway; CTP from UDP: step 2/2. With respect to regulation, allosterically activated by GTP, when glutamine is the substrate; GTP has no effect on the reaction when ammonia is the substrate. The allosteric effector GTP functions by stabilizing the protein conformation that binds the tetrahedral intermediate(s) formed during glutamine hydrolysis. Inhibited by the product CTP, via allosteric rather than competitive inhibition. In terms of biological role, catalyzes the ATP-dependent amination of UTP to CTP with either L-glutamine or ammonia as the source of nitrogen. Regulates intracellular CTP levels through interactions with the four ribonucleotide triphosphates. In Salinibacter ruber (strain DSM 13855 / M31), this protein is CTP synthase.